Here is a 102-residue protein sequence, read N- to C-terminus: Small ribosomal subunit protein uS10 (102 aa).

The protein belongs to the universal ribosomal protein uS10 family. Part of the 30S ribosomal subunit.

Its function is as follows. Involved in the binding of tRNA to the ribosomes. The polypeptide is Small ribosomal subunit protein uS10 (Fervidobacterium nodosum (strain ATCC 35602 / DSM 5306 / Rt17-B1)).